A 307-amino-acid polypeptide reads, in one-letter code: Aspartate carbamoyltransferase catalytic subunit (307 aa).

Carbamoyl phosphate-binding residues include Arg-58 and Thr-59. Lys-86 is an L-aspartate binding site. Carbamoyl phosphate is bound by residues Arg-108, His-138, and Gln-141. L-aspartate is bound by residues Arg-171 and Arg-223. Ala-264 and Pro-265 together coordinate carbamoyl phosphate.

Belongs to the aspartate/ornithine carbamoyltransferase superfamily. ATCase family. As to quaternary structure, heterododecamer (2C3:3R2) of six catalytic PyrB chains organized as two trimers (C3), and six regulatory PyrI chains organized as three dimers (R2).

It carries out the reaction carbamoyl phosphate + L-aspartate = N-carbamoyl-L-aspartate + phosphate + H(+). Its pathway is pyrimidine metabolism; UMP biosynthesis via de novo pathway; (S)-dihydroorotate from bicarbonate: step 2/3. Functionally, catalyzes the condensation of carbamoyl phosphate and aspartate to form carbamoyl aspartate and inorganic phosphate, the committed step in the de novo pyrimidine nucleotide biosynthesis pathway. The chain is Aspartate carbamoyltransferase catalytic subunit from Streptococcus suis (strain 98HAH33).